The sequence spans 344 residues: Flavonoid 7-O-methyltransferase 1A (344 aa).

Aspartate 211 is an S-adenosyl-L-methionine binding site. The active-site Proton acceptor is histidine 249.

The protein belongs to the class I-like SAM-binding methyltransferase superfamily. Cation-independent O-methyltransferase family. Homodimer.

It carries out the reaction apigenin + S-adenosyl-L-methionine = genkwanin + S-adenosyl-L-homocysteine + H(+). The catalysed reaction is luteolin + S-adenosyl-L-methionine = luteolin 7-methyl ether + S-adenosyl-L-homocysteine + H(+). The enzyme catalyses quercetin + S-adenosyl-L-methionine = rhamnetin + S-adenosyl-L-homocysteine + H(+). It catalyses the reaction (2S)-naringenin + S-adenosyl-L-methionine = (2S)-sakuranetin + S-adenosyl-L-homocysteine + H(+). It carries out the reaction kaempferol + S-adenosyl-L-methionine = kaempferol 7-methyl ether + S-adenosyl-L-homocysteine + H(+). The catalysed reaction is isorhamnetin + S-adenosyl-L-methionine = rhamnacene + S-adenosyl-L-homocysteine + H(+). The enzyme catalyses 4',7,8-trihydroxyflavone + S-adenosyl-L-methionine = 4',8-dihydroxy-7-methoxyflavone + S-adenosyl-L-homocysteine. It catalyses the reaction scutellarein + S-adenosyl-L-methionine = scutellarein 7-methyl ether + S-adenosyl-L-homocysteine. The protein operates within flavonoid metabolism. Functionally, flavonoid 7-O-methyltransferase involved in the biosynthesis of polymethoxylated flavonoids natural products such as pebrellin, aroma compounds which contribute to the flavor of peppermint, and exhibit pharmacological activities such as anti-allergic, anti-oxidant, antibacterial, anti-proliferative, and anti-inflammatory effects. Catalyzes S-adenosylmethionine-dependent regioselective 7-O-methylation of flavonoids; active on various hydroxylated flavonoid substrates, including luteolin (LUT), quercetin, kaempferol, isorhamnetin, apigenin (API), scutellarein (6-hydroxy-apigenin, 6-OH-API, SCU), 7,8,4'-trihydroxy-flavone and naringenin (NAR), and, with a lower efficiency, 7,8,3',4'-tetrahydroxy-flavone, taxifolin, hesperetin and genistein. The sequence is that of Flavonoid 7-O-methyltransferase 1A from Mentha piperita (Peppermint).